We begin with the raw amino-acid sequence, 244 residues long: Carboxy-S-adenosyl-L-methionine synthase (244 aa).

S-adenosyl-L-methionine is bound by residues Tyr40, 65–67 (GCS), 90–91 (DN), 119–120 (DL), Asn134, and Arg201.

It belongs to the class I-like SAM-binding methyltransferase superfamily. Cx-SAM synthase family. Homodimer.

It carries out the reaction prephenate + S-adenosyl-L-methionine = carboxy-S-adenosyl-L-methionine + 3-phenylpyruvate + H2O. Functionally, catalyzes the conversion of S-adenosyl-L-methionine (SAM) to carboxy-S-adenosyl-L-methionine (Cx-SAM). The polypeptide is Carboxy-S-adenosyl-L-methionine synthase (Trichlorobacter lovleyi (strain ATCC BAA-1151 / DSM 17278 / SZ) (Geobacter lovleyi)).